A 219-amino-acid polypeptide reads, in one-letter code: Transcriptional activator protein rep2 (219 aa).

A zinc finger spans residues 177 to 197 (CSKCNTTFNHSTALMMHEATC).

Transcriptional activator which interacts with the mcb binding subunit complex formed by res2 and cdc10. Rep2 is required for the mitotic cell cycle start. This is Transcriptional activator protein rep2 (rep2) from Schizosaccharomyces pombe (strain 972 / ATCC 24843) (Fission yeast).